Reading from the N-terminus, the 274-residue chain is Transmembrane protein 106B (274 aa).

Positions 1–11 (MGKSLSHLPLH) are enriched in low complexity. The interval 1-20 (MGKSLSHLPLHSSKEDAYDG) is disordered. The N-myristoyl glycine moiety is linked to residue Gly-2. The Cytoplasmic portion of the chain corresponds to 2–96 (GKSLSHLPLH…QRLRPRRTKL (95 aa)). Ser-33 is subject to Phosphoserine. Residues 97–117 (YVMASVFVCLLLSGLAVFFLF) form a helical membrane-spanning segment. At 118–274 (PRSIDVKYIG…EYLNVLQPQQ (157 aa)) the chain is on the lumenal side. N-linked (GlcNAc...) asparagine glycans are attached at residues Asn-145, Asn-151, Asn-164, and Asn-183. Cys-214 and Cys-253 are disulfide-bonded. Asn-256 is a glycosylation site (N-linked (GlcNAc...) asparagine).

Belongs to the TMEM106 family. In terms of assembly, can form homomers. Interacts (via N-terminus) with MAP6 (via C-terminus). Interacts (via C-terminus) with the vacuolar-type ATPase subunit ATP6AP1. Interacts (via N-terminus) with AP2M1 and CLTC. Interacts with TMEM106C. (Microbial infection) Interacts with SARS coronavirus-2/SARS-CoV-2 spike protein (via RBD domain). As to expression, expressed in the brain, including in the frontal cortex (at protein level). Expressed in lung epithelial cells.

It localises to the late endosome membrane. It is found in the lysosome membrane. Its subcellular location is the cell membrane. In terms of biological role, in neurons, involved in the transport of late endosomes/lysosomes. May be involved in dendrite morphogenesis and maintenance by regulating lysosomal trafficking. May act as a molecular brake for retrograde transport of late endosomes/lysosomes, possibly via its interaction with MAP6. In motoneurons, may mediate the axonal transport of lysosomes and axonal sorting at the initial segment. It remains unclear whether TMEM106B affects the transport of moving lysosomes in the anterograde or retrograde direction in neurites and whether it is important in the sorting of lysosomes in axons or in dendrites. In neurons, may also play a role in the regulation of lysosomal size and responsiveness to stress. Required for proper lysosomal acidification. Functionally, (Microbial infection) Plays a role in human coronavirus SARS-CoV-2 infection, but not in common cold coronaviruses HCoV-229E and HCoV-OC43 infections. Involved in ACE2-independent SARS-CoV-2 cell entry. Required for post-endocytic stage of virus entry, facilitates spike-mediated membrane fusion. Virus attachment and endocytosis can also be mediated by other cell surface receptors. The sequence is that of Transmembrane protein 106B from Homo sapiens (Human).